The primary structure comprises 1173 residues: Clustered mitochondria protein homolog (1173 aa).

Low complexity predominate over residues 1–21 (MSTIDLPTSSLPGSSGDPSGT). Positions 1 to 25 (MSTIDLPTSSLPGSSGDPSGTEMSH) are disordered. In terms of domain architecture, Clu spans 316-565 (VPHRADLSRT…SLFPLDAQFL (250 aa)). A disordered region spans residues 888–910 (KFTGKKGNKKKRNLGKSQNTTNR). Over residues 890–901 (TGKKGNKKKRNL) the composition is skewed to basic residues. The TPR repeat unit spans residues 984 to 1017 (ARAYCQLAMIYHQLEKKEEAVELARKAVIVCERF).

Belongs to the CLU family. In terms of assembly, may associate with the eukaryotic translation initiation factor 3 (eIF-3) complex.

The protein localises to the cytoplasm. Functionally, mRNA-binding protein involved in proper cytoplasmic distribution of mitochondria. The sequence is that of Clustered mitochondria protein homolog from Schizosaccharomyces pombe (strain 972 / ATCC 24843) (Fission yeast).